Here is a 231-residue protein sequence, read N- to C-terminus: Orotidine 5'-phosphate decarboxylase (231 aa).

Substrate-binding positions include Asp11, Lys33, 60-69, Thr120, Arg181, Gln190, Gly210, and Arg211; that span reads DLKFHDIPNT. The active-site Proton donor is Lys62.

It belongs to the OMP decarboxylase family. Type 1 subfamily. As to quaternary structure, homodimer.

The catalysed reaction is orotidine 5'-phosphate + H(+) = UMP + CO2. It participates in pyrimidine metabolism; UMP biosynthesis via de novo pathway; UMP from orotate: step 2/2. In terms of biological role, catalyzes the decarboxylation of orotidine 5'-monophosphate (OMP) to uridine 5'-monophosphate (UMP). This is Orotidine 5'-phosphate decarboxylase from Pseudoalteromonas atlantica (strain T6c / ATCC BAA-1087).